The sequence spans 453 residues: Cysteine--tRNA ligase (453 aa).

Residue cysteine 31 participates in Zn(2+) binding. The short motif at 33-43 is the 'HIGH' region element; sequence PTVYDNPHIGN. Zn(2+) contacts are provided by cysteine 213, histidine 238, and glutamate 242. The 'KMSKS' region signature appears at 271-275; the sequence is KMAKS. An ATP-binding site is contributed by lysine 274.

Belongs to the class-I aminoacyl-tRNA synthetase family. In terms of assembly, monomer. The cofactor is Zn(2+).

Its subcellular location is the cytoplasm. It carries out the reaction tRNA(Cys) + L-cysteine + ATP = L-cysteinyl-tRNA(Cys) + AMP + diphosphate. The protein is Cysteine--tRNA ligase of Pelagibacter ubique (strain HTCC1062).